The chain runs to 1494 residues: Ral GTPase-activating protein subunit beta (1494 aa).

2 disordered regions span residues 355–437 (PRSD…APRR) and 709–738 (ENNL…PDSE). Ser359 carries the phosphoserine modification. 2 positions are modified to phosphothreonine: Thr363 and Thr379. 3 stretches are compositionally biased toward polar residues: residues 369 to 381 (SMPQ…TTPP), 392 to 428 (NKAT…TSSE), and 711 to 735 (NLKS…PTTP). 2 positions are modified to phosphoserine: Ser421 and Ser720. Thr734 bears the Phosphothreonine mark. A Rap-GAP domain is found at 1149-1392 (IGYLDLLPCR…TTLEKEVPVI (244 aa)). Ser1285 carries the phosphoserine modification. Polar residues predominate over residues 1312-1323 (NLNSSQRLSPSS). The interval 1312–1335 (NLNSSQRLSPSSRMRKLPQGRPVP) is disordered.

As to quaternary structure, component of the heterodimeric RalGAP1 complex with RALGAPA1 and of the heterodimeric RalGAP2 complex with RALGAPA2. Heterodimerization is required for activity. As to expression, highly expressed in brain, mostly in amygdala.

Non-catalytic subunit of the heterodimeric RalGAP1 and RalGAP2 complexes which act as GTPase activators for the Ras-like small GTPases RALA and RALB. In Homo sapiens (Human), this protein is Ral GTPase-activating protein subunit beta (RALGAPB).